A 179-amino-acid polypeptide reads, in one-letter code: UPF0227 protein VC0395_A1482/VC395_2007 (179 aa).

The protein belongs to the UPF0227 family.

The chain is UPF0227 protein VC0395_A1482/VC395_2007 from Vibrio cholerae serotype O1 (strain ATCC 39541 / Classical Ogawa 395 / O395).